The primary structure comprises 1176 residues: MDFRANLQRQVKPKTLSEEERKVHGPQQVDFRSVLAKKGTPKTPVPEKVPPPKPATPDFRSVLGSKKKLPTENGSNNTEALNAKAAEGLKPVGNAQPSGFLKPVGNAKLADTPKPLSSTKPAETPKPLGNVKPAETPKPLGSTKPAETPKPLGSTKPAETPKPLGNVKPAETPKPLGNIKPTETPKPLGSTKPAETPKPLGSTKPAETPKPLGNVKPAETPKPLGNVKPAETPKPLGNVKPAETPKPVSNAKPAETLKPVGNAKPAETPKPLSNVKPAETPKLVGNAKPAETSKPLDNAKPAEAPKPLGNAKPAEIPKPTGKEELKKEIKNDVNCKKGHAGATDSEKRPESRGTAPTFEEKLQDLHVAEGQKLLLQCRVSSDPPATITWTLNGKTLKTTKFIVLSQEGSLCSVSIEKALPEDRGLYKCVAKNSAGQAESSCQVTVDVPDAPTSENAKAPEMKARRPKSSLPPVLGTESDATVKKKPAPKTPPKAAMPPQIIQFPEDQKVRAGESVELFGKVAGTQPITCTWMKFRKQIQDSEHIKVENSEQGSKLTIRAARQEHCGCYTLLVENKLGSRQAQVNLTVVDKPDPPAGTPCASDIRSSSLTLSWYGSSYDGGSAVQSYSVEIWDSVDKTWKELATCRSTSFNVQDLLPDREYKFRVRAINVYGTSEPSQESELTALGEKPEEEPKDEVEVSDDDEKEPEVDYRTVTVNTEQKVSDFYDIEERLGSGKFGQVFRLVEKKTGKIWAGKFFKAYSAKEKENIRQEISIMNCLHHPKLVQCVDAFEEKANIVMVLEIVSGGELFERIIDEDFELTERECIKYMKQISEGVEYIHKQGIVHLDLKPENIMCVNKTGTRIKLIDFGLARRLENAGSLKVLFGTPEFVAPEVINYEPIGYATDMWSIGVICYILVSGLSPFMGDNDNETLANVTSATWDFDDEAFDEISDDAKDFISNLLKKDMKNRLNCTQCLQHPWLMKDTKNMEAKKLSKDRMKKYMARRKWQKTGNAVRAIGRLSSMAMISGLSGRKSSTGSPTSPLNAEKLESEDVSQAFLEAVAEEKPHVKPYFSKTIRDLEVVEGSAARFDCKIEGYPDPEVVWFKDDQSIRESRHFQIDYDEDGNCSLIISDVCGDDDAKYTCKAVNSLGEATCTAELIVETMEEGEGEGGEEEEEE.

The interval 1–41 is actin-binding (calcium/calmodulin-sensitive); that stretch reads MDFRANLQRQVKPKTLSEEERKVHGPQQVDFRSVLAKKGTP. The segment at 1-354 is disordered; the sequence is MDFRANLQRQ…SEKRPESRGT (354 aa). Positions 26–41 are calmodulin-binding; it reads PQQVDFRSVLAKKGTP. A compositionally biased stretch (pro residues) spans 43–55; that stretch reads TPVPEKVPPPKPA. A run of 16 repeats spans residues 100 to 111, 112 to 123, 124 to 135, 136 to 147, 148 to 159, 160 to 171, 172 to 183, 184 to 195, 196 to 207, 208 to 219, 220 to 231, 232 to 243, 244 to 255, 256 to 267, 268 to 279, and 280 to 291. Residues 100–291 are 16 X 12 AA tandem repeats; the sequence is FLKPVGNAKL…KLVGNAKPAE (192 aa). Serine 202 is modified (phosphoserine). Residues 319-721 form an actin-binding (calcium/calmodulin-insensitive) region; it reads PTGKEELKKE…TVTVNTEQKV (403 aa). The segment covering 320–335 has biased composition (basic and acidic residues); it reads TGKEELKKEIKNDVNC. Residues 356 to 444 enclose the Ig-like C2-type 1 domain; the sequence is PTFEEKLQDL…GQAESSCQVT (89 aa). An intrachain disulfide couples cysteine 377 to cysteine 428. Residues 448-497 are disordered; it reads PDAPTSENAKAPEMKARRPKSSLPPVLGTESDATVKKKPAPKTPPKAAMP. An Ig-like C2-type 2 domain is found at 498 to 586; sequence PQIIQFPEDQ…GSRQAQVNLT (89 aa). Residues 594 to 686 form the Fibronectin type-III domain; the sequence is PAGTPCASDI…QESELTALGE (93 aa). The interval 673 to 707 is disordered; that stretch reads SEPSQESELTALGEKPEEEPKDEVEVSDDDEKEPE. Over residues 688 to 706 the composition is skewed to acidic residues; the sequence is PEEEPKDEVEVSDDDEKEP. Serine 699 carries the phosphoserine modification. Phosphotyrosine; by ABL1 is present on tyrosine 710. The 256-residue stretch at 725–980 folds into the Protein kinase domain; sequence YDIEERLGSG…CTQCLQHPWL (256 aa). ATP is bound by residues 731-739 and lysine 754; that span reads LGSGKFGQV. Phosphotyrosine; by ABL1 is present on tyrosine 836. The active-site Proton acceptor is the aspartate 846. Residue tyrosine 896 is modified to Phosphotyrosine; by ABL1. A calmodulin-binding region spans residues 972 to 1035; the sequence is TQCLQHPWLM…SGLSGRKSST (64 aa). 5 positions are modified to phosphoserine: serine 1020, serine 1021, serine 1033, serine 1034, and serine 1037. Threonine 1039 is modified (phosphothreonine). Serine 1040 is modified (phosphoserine). In terms of domain architecture, Ig-like C2-type 3 spans 1069 to 1158; it reads PYFSKTIRDL…GEATCTAELI (90 aa). Cysteine 1090 and cysteine 1142 form a disulfide bridge.

This sequence belongs to the protein kinase superfamily. CAMK Ser/Thr protein kinase family. All isoforms including Telokin bind calmodulin. Interacts with SVIL. Interacts with CTTN; this interaction is reduced during thrombin-induced endothelial cell (EC) contraction but is promoted by the barrier-protective agonist sphingosine 1-phosphate (S1P) within lamellipodia. A complex made of ABL1, CTTN and MYLK regulates cortical actin-based cytoskeletal rearrangement critical to sphingosine 1-phosphate (S1P)-mediated endothelial cell (EC) barrier enhancement. Binds to NAA10/ARD1 and PTK2B/PYK2. Mg(2+) serves as cofactor. The cofactor is Ca(2+). Post-translationally, the C-terminus is deglutamylated by AGTPBP1/CCP1, AGBL1/CCP4 and AGBL4/CCP6, leading to the formation of Myosin light chain kinase, smooth muscle, deglutamylated form. The consequences of C-terminal deglutamylation are unknown. In terms of processing, can probably be down-regulated by phosphorylation. Tyrosine phosphorylation by ABL1 increases kinase activity, reverses MLCK-mediated inhibition of Arp2/3-mediated actin polymerization, and enhances CTTN-binding. Phosphorylation by SRC promotes CTTN binding.

The protein localises to the cytoplasm. Its subcellular location is the cell projection. It localises to the lamellipodium. The protein resides in the cleavage furrow. It is found in the cytoskeleton. The protein localises to the stress fiber. It catalyses the reaction L-seryl-[myosin light chain] + ATP = O-phospho-L-seryl-[myosin light chain] + ADP + H(+). It carries out the reaction L-threonyl-[myosin light chain] + ATP = O-phospho-L-threonyl-[myosin light chain] + ADP + H(+). In terms of biological role, calcium/calmodulin-dependent myosin light chain kinase implicated in smooth muscle contraction via phosphorylation of myosin light chains (MLC). Also regulates actin-myosin interaction through a non-kinase activity. Phosphorylates PTK2B/PYK2 and myosin light-chains. Involved in the inflammatory response (e.g. apoptosis, vascular permeability, leukocyte diapedesis), cell motility and morphology, airway hyperreactivity and other activities relevant to asthma. Required for tonic airway smooth muscle contraction that is necessary for physiological and asthmatic airway resistance. Necessary for gastrointestinal motility. Implicated in the regulation of endothelial as well as vascular permeability, probably via the regulation of cytoskeletal rearrangements. In the nervous system it has been shown to control the growth initiation of astrocytic processes in culture and to participate in transmitter release at synapses formed between cultured sympathetic ganglion cells. Critical participant in signaling sequences that result in fibroblast apoptosis. Plays a role in the regulation of epithelial cell survival. Required for epithelial wound healing, especially during actomyosin ring contraction during purse-string wound closure. Mediates RhoA-dependent membrane blebbing. Triggers TRPC5 channel activity in a calcium-dependent signaling, by inducing its subcellular localization at the plasma membrane. Promotes cell migration (including tumor cells) and tumor metastasis. PTK2B/PYK2 activation by phosphorylation mediates ITGB2 activation and is thus essential to trigger neutrophil transmigration during acute lung injury (ALI). May regulate optic nerve head astrocyte migration. Probably involved in mitotic cytoskeletal regulation. Regulates tight junction probably by modulating ZO-1 exchange in the perijunctional actomyosin ring. Mediates burn-induced microvascular barrier injury; triggers endothelial contraction in the development of microvascular hyperpermeability by phosphorylating MLC. Essential for intestinal barrier dysfunction. Mediates Giardia spp.-mediated reduced epithelial barrier function during giardiasis intestinal infection via reorganization of cytoskeletal F-actin and tight junctional ZO-1. Necessary for hypotonicity-induced Ca(2+) entry and subsequent activation of volume-sensitive organic osmolyte/anion channels (VSOAC) in cervical cancer cells. The sequence is that of Myosin light chain kinase, smooth muscle (MYLK) from Bos taurus (Bovine).